Reading from the N-terminus, the 317-residue chain is Aspartate carbamoyltransferase catalytic subunit (317 aa).

Carbamoyl phosphate contacts are provided by R66 and T67. K94 contacts L-aspartate. Carbamoyl phosphate is bound by residues R116, H144, and Q147. The L-aspartate site is built by R177 and R231. 2 residues coordinate carbamoyl phosphate: G272 and P273.

It belongs to the aspartate/ornithine carbamoyltransferase superfamily. ATCase family. Heterododecamer (2C3:3R2) of six catalytic PyrB chains organized as two trimers (C3), and six regulatory PyrI chains organized as three dimers (R2).

It catalyses the reaction carbamoyl phosphate + L-aspartate = N-carbamoyl-L-aspartate + phosphate + H(+). Its pathway is pyrimidine metabolism; UMP biosynthesis via de novo pathway; (S)-dihydroorotate from bicarbonate: step 2/3. Catalyzes the condensation of carbamoyl phosphate and aspartate to form carbamoyl aspartate and inorganic phosphate, the committed step in the de novo pyrimidine nucleotide biosynthesis pathway. The polypeptide is Aspartate carbamoyltransferase catalytic subunit (Rhodopseudomonas palustris (strain BisB18)).